Consider the following 183-residue polypeptide: NAD(P)H-quinone oxidoreductase subunit I, chloroplastic (183 aa).

2 consecutive 4Fe-4S ferredoxin-type domains span residues 55 to 84 (GRIH…VDWE) and 95 to 124 (TSYS…MTEE). [4Fe-4S] cluster contacts are provided by cysteine 64, cysteine 67, cysteine 70, cysteine 74, cysteine 104, cysteine 107, cysteine 110, and cysteine 114.

The protein belongs to the complex I 23 kDa subunit family. NDH is composed of at least 16 different subunits, 5 of which are encoded in the nucleus. The cofactor is [4Fe-4S] cluster.

The protein resides in the plastid. The protein localises to the chloroplast thylakoid membrane. It carries out the reaction a plastoquinone + NADH + (n+1) H(+)(in) = a plastoquinol + NAD(+) + n H(+)(out). The enzyme catalyses a plastoquinone + NADPH + (n+1) H(+)(in) = a plastoquinol + NADP(+) + n H(+)(out). NDH shuttles electrons from NAD(P)H:plastoquinone, via FMN and iron-sulfur (Fe-S) centers, to quinones in the photosynthetic chain and possibly in a chloroplast respiratory chain. The immediate electron acceptor for the enzyme in this species is believed to be plastoquinone. Couples the redox reaction to proton translocation, and thus conserves the redox energy in a proton gradient. This Huperzia lucidula (Shining clubmoss) protein is NAD(P)H-quinone oxidoreductase subunit I, chloroplastic.